A 513-amino-acid polypeptide reads, in one-letter code: MEISWGRALWRNFLGQSPDWYKLALIIFLIVNPLIFLISPFVAGWLLVAEFIFTLAMALKCYPLLPGGLLAIEAVFIGMTSAEHVREEVAANLEVLLLLMFMVAGIYFMKQLLLFIFTRLLLSIRSKMLLSLSFCVAAAFLSAFLDALTVVAVVISVAVGFYGIYHRVASSRTEDTDLQDDSHIDKHYKVVLEQFRGFLRSLMMHAGVGTALGGVMTMVGEPQNLIIAKAAGWHFGDFFLRMSPVTVPVLICGLLTCLLVEKLRWFGYGETLPEKVREVLQQFDDQSRHQRTRQDKIRLIVQAIIGVWLVTALALHLAEVGLIGLSVIILATSLIGVTDEHAIGKAFTESLPFTALLTVFFSVVAVIIDQQLFSPIIQFVLQASEHAQLSLFYIFNGLLSSISDNVFVGTIYINEAKAAMESGAITLKQYELLAVAINTGTNLPSVATPNGQAAFLFLLTSALAPLIRLSYGRMVWMALPYTLVLTLVGLLCVEFTLAPVTEWFMQMGWIATL.

12 helical membrane passes run 23–43 (LALIIFLIVNPLIFLISPFVA), 52–72 (IFTLAMALKCYPLLPGGLLAI), 97–117 (LLLMFMVAGIYFMKQLLLFIF), 120–140 (LLLSIRSKMLLSLSFCVAAAF), 144–164 (FLDALTVVAVVISVAVGFYGI), 202–222 (LMMHAGVGTALGGVMTMVGEP), 238–258 (FFLRMSPVTVPVLICGLLTCL), 303–323 (AIIGVWLVTALALHLAEVGLI), 348–368 (TESLPFTALLTVFFSVVAVII), 391–411 (LFYIFNGLLSSISDNVFVGTI), 447–467 (ATPNGQAAFLFLLTSALAPLI), and 475–495 (VWMALPYTLVLTLVGLLCVEF).

This sequence belongs to the NhaB Na(+)/H(+) (TC 2.A.34) antiporter family.

The protein localises to the cell inner membrane. It catalyses the reaction 2 Na(+)(in) + 3 H(+)(out) = 2 Na(+)(out) + 3 H(+)(in). In terms of biological role, na(+)/H(+) antiporter that extrudes sodium in exchange for external protons. This is Na(+)/H(+) antiporter NhaB from Shigella sonnei (strain Ss046).